The following is an 87-amino-acid chain: Small ribosomal subunit protein uS17 (87 aa).

Belongs to the universal ribosomal protein uS17 family. As to quaternary structure, part of the 30S ribosomal subunit.

Functionally, one of the primary rRNA binding proteins, it binds specifically to the 5'-end of 16S ribosomal RNA. This Bacillus velezensis (strain DSM 23117 / BGSC 10A6 / LMG 26770 / FZB42) (Bacillus amyloliquefaciens subsp. plantarum) protein is Small ribosomal subunit protein uS17.